A 372-amino-acid polypeptide reads, in one-letter code: Glutamate 5-kinase (372 aa).

Lysine 6 lines the ATP pocket. Residues serine 46, aspartate 133, and asparagine 145 each coordinate substrate. Residues 165-166 (TD) and 207-213 (TGGMYTK) contribute to the ATP site. Residues 272–350 (NGFLFVDEGA…HDIESILGYK (79 aa)) enclose the PUA domain.

Belongs to the glutamate 5-kinase family.

The protein localises to the cytoplasm. It catalyses the reaction L-glutamate + ATP = L-glutamyl 5-phosphate + ADP. It functions in the pathway amino-acid biosynthesis; L-proline biosynthesis; L-glutamate 5-semialdehyde from L-glutamate: step 1/2. Functionally, catalyzes the transfer of a phosphate group to glutamate to form L-glutamate 5-phosphate. This chain is Glutamate 5-kinase, found in Caldanaerobacter subterraneus subsp. tengcongensis (strain DSM 15242 / JCM 11007 / NBRC 100824 / MB4) (Thermoanaerobacter tengcongensis).